The sequence spans 478 residues: Protein WVD2-like 7 (478 aa).

Disordered regions lie at residues 201–326 (DSAL…TGST) and 385–420 (PMPSFYNIGTRPVSHNKTEPSKVAQSRSRPATSASI). A compositionally biased stretch (basic and acidic residues) spans 208–217 (AGSKLDEHAS). Composition is skewed to polar residues over residues 219–232 (KPSNSMETPSSSVN) and 264–277 (GSSLSSNSKTNVDA). The segment covering 278–289 (KSQKELRPKKTI) has biased composition (basic and acidic residues). Composition is skewed to polar residues over residues 309 to 326 (RCKTSTTSSKLEMSTGST) and 407 to 420 (VAQSRSRPATSASI).

It belongs to the TPX2 family. Expressed in seedlings.

It is found in the cytoplasm. The protein resides in the cytoskeleton. Functionally, microtubule-associated protein (MAP) that regulates the orientation of interphase cortical microtubules. The chain is Protein WVD2-like 7 from Arabidopsis thaliana (Mouse-ear cress).